We begin with the raw amino-acid sequence, 306 residues long: Ribonuclease Z (306 aa).

Residues H63, H65, D67, H68, H140, D211, and H269 each coordinate Zn(2+). Residue D67 is the Proton acceptor of the active site.

This sequence belongs to the RNase Z family. Homodimer. The cofactor is Zn(2+).

The catalysed reaction is Endonucleolytic cleavage of RNA, removing extra 3' nucleotides from tRNA precursor, generating 3' termini of tRNAs. A 3'-hydroxy group is left at the tRNA terminus and a 5'-phosphoryl group is left at the trailer molecule.. Its function is as follows. Zinc phosphodiesterase, which displays some tRNA 3'-processing endonuclease activity. Probably involved in tRNA maturation, by removing a 3'-trailer from precursor tRNA. The sequence is that of Ribonuclease Z from Listeria welshimeri serovar 6b (strain ATCC 35897 / DSM 20650 / CCUG 15529 / CIP 8149 / NCTC 11857 / SLCC 5334 / V8).